The chain runs to 610 residues: Peptidyl-prolyl cis-trans isomerase 9 (610 aa).

At S13 the chain carries Phosphoserine. 3 WD repeats span residues 45–83 (MHNA…VEYI), 88–127 (AHNA…LVNI), and 177–216 (KHTA…QKPD). Residues 453–607 (LGKAAIIHTT…EPTKIINISI (155 aa)) form the PPIase cyclophilin-type domain.

It belongs to the cyclophilin-type PPIase family.

It is found in the nucleus. It carries out the reaction [protein]-peptidylproline (omega=180) = [protein]-peptidylproline (omega=0). Its function is as follows. PPIases accelerate the folding of proteins. It catalyzes the cis-trans isomerization of proline imidic peptide bonds in oligopeptides. This is Peptidyl-prolyl cis-trans isomerase 9 (cyp9) from Schizosaccharomyces pombe (strain 972 / ATCC 24843) (Fission yeast).